The sequence spans 173 residues: Archaemetzincin (173 aa).

Residue H130 participates in Zn(2+) binding. E131 acts as the Proton acceptor in catalysis. The Zn(2+) site is built by H134, H140, C141, C146, C165, and C168.

Belongs to the peptidase M54 family. Monomer. The cofactor is Zn(2+).

In terms of biological role, probable zinc metalloprotease whose natural substrate is unknown. This chain is Archaemetzincin, found in Natronomonas pharaonis (strain ATCC 35678 / DSM 2160 / CIP 103997 / JCM 8858 / NBRC 14720 / NCIMB 2260 / Gabara) (Halobacterium pharaonis).